Reading from the N-terminus, the 90-residue chain is Small ribosomal subunit protein uS15 (90 aa).

The protein belongs to the universal ribosomal protein uS15 family. Part of the 30S ribosomal subunit. Forms a bridge to the 50S subunit in the 70S ribosome, contacting the 23S rRNA.

Functionally, one of the primary rRNA binding proteins, it binds directly to 16S rRNA where it helps nucleate assembly of the platform of the 30S subunit by binding and bridging several RNA helices of the 16S rRNA. In terms of biological role, forms an intersubunit bridge (bridge B4) with the 23S rRNA of the 50S subunit in the ribosome. The chain is Small ribosomal subunit protein uS15 from Thermotoga maritima (strain ATCC 43589 / DSM 3109 / JCM 10099 / NBRC 100826 / MSB8).